The chain runs to 344 residues: Dihydroorotate dehydrogenase (quinone) (344 aa).

Residues 64-68 and T88 contribute to the FMN site; that span reads AGLDK. Position 68 (K68) interacts with substrate. 113 to 117 contributes to the substrate binding site; that stretch reads NRMGF. FMN-binding residues include N144 and N177. N177 provides a ligand contact to substrate. S180 functions as the Nucleophile in the catalytic mechanism. N182 lines the substrate pocket. FMN is bound by residues K222 and T250. Residue 251–252 coordinates substrate; that stretch reads NT. FMN contacts are provided by residues G273, G302, and 323 to 324; that span reads YS.

This sequence belongs to the dihydroorotate dehydrogenase family. Type 2 subfamily. In terms of assembly, monomer. The cofactor is FMN.

It is found in the cell membrane. It carries out the reaction (S)-dihydroorotate + a quinone = orotate + a quinol. The protein operates within pyrimidine metabolism; UMP biosynthesis via de novo pathway; orotate from (S)-dihydroorotate (quinone route): step 1/1. Catalyzes the conversion of dihydroorotate to orotate with quinone as electron acceptor. This is Dihydroorotate dehydrogenase (quinone) from Polynucleobacter asymbioticus (strain DSM 18221 / CIP 109841 / QLW-P1DMWA-1) (Polynucleobacter necessarius subsp. asymbioticus).